The sequence spans 218 residues: Probable nicotinate-nucleotide adenylyltransferase (218 aa).

It belongs to the NadD family.

It catalyses the reaction nicotinate beta-D-ribonucleotide + ATP + H(+) = deamido-NAD(+) + diphosphate. It participates in cofactor biosynthesis; NAD(+) biosynthesis; deamido-NAD(+) from nicotinate D-ribonucleotide: step 1/1. Its function is as follows. Catalyzes the reversible adenylation of nicotinate mononucleotide (NaMN) to nicotinic acid adenine dinucleotide (NaAD). This is Probable nicotinate-nucleotide adenylyltransferase from Burkholderia lata (strain ATCC 17760 / DSM 23089 / LMG 22485 / NCIMB 9086 / R18194 / 383).